A 183-amino-acid chain; its full sequence is Lipid droplet coating protein Cap20 (183 aa).

The protein belongs to the perilipin family.

Its subcellular location is the lipid droplet. Lipid droplet coating protein that regulates lipid metabolism, appressorial turgor pressure, and virulence. Appressorial turgor pressure is important for the mechanical penetration of the host cuticle during infection. The sequence is that of Lipid droplet coating protein Cap20 (Cap20) from Colletotrichum gloeosporioides (Anthracnose fungus).